The chain runs to 272 residues: MLIYGKDIREQIKERVRQSAEEVKMGLAIIRVGDDPSSMAYVRGIRKFAEETGVKVEIVNLPDAVGERELLKTIGDLNNSSEITGIMLQTPLPASLNASHLVNAIDFDKDVEGIHNYNLGKLISKEEGVRPCTPKAVISMLKAHDILIEGQKVTIIGRSMTVGSPLALMMTAENATVTVCHTRTRNLKEEALRADILVAAVGKREFVTADMVHKDMVVIDVGINFDENGKMLGDVHEEARNHCRLASAVPGGIGVITVAELFDNLRILSQKA.

Residues 157 to 159 (GRS), threonine 182, and isoleucine 223 contribute to the NADP(+) site.

The protein belongs to the tetrahydrofolate dehydrogenase/cyclohydrolase family. In terms of assembly, homodimer.

It catalyses the reaction (6R)-5,10-methylene-5,6,7,8-tetrahydrofolate + NADP(+) = (6R)-5,10-methenyltetrahydrofolate + NADPH. The enzyme catalyses (6R)-5,10-methenyltetrahydrofolate + H2O = (6R)-10-formyltetrahydrofolate + H(+). Its pathway is one-carbon metabolism; tetrahydrofolate interconversion. Catalyzes the oxidation of 5,10-methylenetetrahydrofolate to 5,10-methenyltetrahydrofolate and then the hydrolysis of 5,10-methenyltetrahydrofolate to 10-formyltetrahydrofolate. This Syntrophomonas wolfei subsp. wolfei (strain DSM 2245B / Goettingen) protein is Bifunctional protein FolD 2.